The primary structure comprises 442 residues: Probable alpha-galactosidase B (442 aa).

A signal peptide spans M1–A19. 2 cysteine pairs are disulfide-bonded: C42-C74 and C124-C154. D152 acts as the Nucleophile in catalysis. Residues N159, N173, N179, and N215 are each glycosylated (N-linked (GlcNAc...) asparagine). Residue E224–A228 coordinates substrate. A glycan (N-linked (GlcNAc...) asparagine) is linked at N235. The Proton donor role is filled by D246. N-linked (GlcNAc...) asparagine glycosylation occurs at N285.

The protein belongs to the glycosyl hydrolase 27 family.

The protein resides in the secreted. It carries out the reaction Hydrolysis of terminal, non-reducing alpha-D-galactose residues in alpha-D-galactosides, including galactose oligosaccharides, galactomannans and galactolipids.. Functionally, hydrolyzes a variety of simple alpha-D-galactoside as well as more complex molecules such as oligosaccharides and polysaccharides. The sequence is that of Probable alpha-galactosidase B (aglB) from Aspergillus oryzae (strain ATCC 42149 / RIB 40) (Yellow koji mold).